Reading from the N-terminus, the 259-residue chain is Aliphatic sulfonates import ATP-binding protein SsuB 1 (259 aa).

An ABC transporter domain is found at 15-229; it reads VECRRITRRF…QASTPGFQAL (215 aa). 47–54 lines the ATP pocket; the sequence is GSSGSGKT.

Belongs to the ABC transporter superfamily. Aliphatic sulfonates importer (TC 3.A.1.17.2) family. The complex is composed of two ATP-binding proteins (SsuB), two transmembrane proteins (SsuC) and a solute-binding protein (SsuA).

Its subcellular location is the cell inner membrane. It catalyses the reaction ATP + H2O + aliphatic sulfonate-[sulfonate-binding protein]Side 1 = ADP + phosphate + aliphatic sulfonateSide 2 + [sulfonate-binding protein]Side 1.. In terms of biological role, part of the ABC transporter complex SsuABC involved in aliphatic sulfonates import. Responsible for energy coupling to the transport system. This is Aliphatic sulfonates import ATP-binding protein SsuB 1 from Pseudomonas fluorescens (strain ATCC BAA-477 / NRRL B-23932 / Pf-5).